Consider the following 377-residue polypeptide: MAAPLLGSPGLQVLSMSSRTGKLFTPSSRSFCSRATSSRPLNAQRLAEKLRAQKQEQKTKEMRVPTNPVQRRVQELVRFTQQLQRVHPNVLAKELSRRILHQDKDLVVINKPYGLPVHGGPGVQLCISDVLPILAKMLHGHKAEPLHLCHRLDKETTGVMVLAWEKDMAHQVQELFRTRQVEKKYWAITVRVPLPSAGVVDIPIMEKEVAGQQQHHKMTLRPSYRMDNGKMVKVRASRDAHVAVTQYQVLSSTPSSALVELQPVTGIKHQLRVHLAFGLDCPILGDHKYSDWNRLAPQKLSAGTLKKLGLQQSKARYIPLHLHARQLILPALGSRTEELLLACKLPHFFARSLRRLGLDMPNEDQSRSHEARHVEAR.

A mitochondrion-targeting transit peptide spans 1–35 (MAAPLLGSPGLQVLSMSSRTGKLFTPSSRSFCSRA). Asp153 is a catalytic residue.

This sequence belongs to the pseudouridine synthase RluA family. In terms of assembly, interacts with 16S mt-rRNA, mt-tRNA(Phe) and mt-tRNA(Met). Forms a regulatory protein-RNA complex, consisting of RCC1L, NGRN, RPUSD3, RPUSD4, TRUB2, FASTKD2 and 16S mt-rRNA.

Its subcellular location is the mitochondrion matrix. It is found in the nucleus. The protein localises to the cytoplasm. The catalysed reaction is uridine in 5S rRNA = pseudouridine in 5S rRNA. It carries out the reaction a uridine in tRNA = a pseudouridine in tRNA. The enzyme catalyses a uridine in mRNA = a pseudouridine in mRNA. Functionally, catalyzes uridine to pseudouridine isomerization (pseudouridylation) of different mitochondrial RNA substrates. Acts on position 1397 in 16S mitochondrial ribosomal RNA (16S mt-rRNA). This modification is required for the assembly of 16S mt-rRNA into a functional mitochondrial ribosome. As a component of a functional protein-RNA module, consisting of RCC1L, NGRN, RPUSD3, RPUSD4, TRUB2, FASTKD2 and 16S mt-rRNA, controls 16S mt-rRNA abundance and is required for intra-mitochondrial translation. Acts on position 39 in mitochondrial tRNA(Phe). Also catalyzes pseudouridylation of mRNAs in nucleus: acts as a regulator of pre-mRNA splicing by mediating pseudouridylation of pre-mRNAs at locations associated with alternatively spliced regions. Pseudouridylation of pre-mRNAs near splice sites directly regulates mRNA splicing and mRNA 3'-end processing. This is Pseudouridylate synthase RPUSD4, mitochondrial from Rattus norvegicus (Rat).